We begin with the raw amino-acid sequence, 84 residues long: Small ribosomal subunit protein bS18 (84 aa).

This sequence belongs to the bacterial ribosomal protein bS18 family. In terms of assembly, part of the 30S ribosomal subunit. Forms a tight heterodimer with protein bS6.

Binds as a heterodimer with protein bS6 to the central domain of the 16S rRNA, where it helps stabilize the platform of the 30S subunit. The sequence is that of Small ribosomal subunit protein bS18 from Ruthia magnifica subsp. Calyptogena magnifica.